The primary structure comprises 277 residues: MDLCGFRVGLDRPLFLIAGPCVVESEQLALDTAGALAEMTGELGIPFIYKSSFDKANRSSHESYRGPGLEAGLRVLEQVRRQIGVPVITDVHEDTPLVEVASVVDVLQTPAFLCRQTNFIQNVARQGRPVNIKKGQFLAPWDMRHVVAKAREAGNQQIMVCERGVSFGYNNLVSDMRALAVMRETGAPVVFDATHSVQLPGGQGSASGGQREFVPVLARAAVAAGVAGLFMETHPDPDQALSDGPNAWPLERMRELLETLMELDQVVKGRGFTEQGL.

The protein belongs to the KdsA family.

Its subcellular location is the cytoplasm. The enzyme catalyses D-arabinose 5-phosphate + phosphoenolpyruvate + H2O = 3-deoxy-alpha-D-manno-2-octulosonate-8-phosphate + phosphate. Its pathway is carbohydrate biosynthesis; 3-deoxy-D-manno-octulosonate biosynthesis; 3-deoxy-D-manno-octulosonate from D-ribulose 5-phosphate: step 2/3. The protein operates within bacterial outer membrane biogenesis; lipopolysaccharide biosynthesis. In Alkalilimnicola ehrlichii (strain ATCC BAA-1101 / DSM 17681 / MLHE-1), this protein is 2-dehydro-3-deoxyphosphooctonate aldolase.